The primary structure comprises 138 residues: Large ribosomal subunit protein uL16 (138 aa).

A compositionally biased stretch (basic residues) spans 1–13 (MLQPARRKYRKEQ). The tract at residues 1-21 (MLQPARRKYRKEQKGRNTGIA) is disordered.

It belongs to the universal ribosomal protein uL16 family. As to quaternary structure, part of the 50S ribosomal subunit.

Functionally, binds 23S rRNA and is also seen to make contacts with the A and possibly P site tRNAs. The polypeptide is Large ribosomal subunit protein uL16 (Albidiferax ferrireducens (strain ATCC BAA-621 / DSM 15236 / T118) (Rhodoferax ferrireducens)).